The following is a 194-amino-acid chain: NADH-quinone oxidoreductase subunit B 1 (194 aa).

The [4Fe-4S] cluster site is built by C47, C48, C113, and C142.

The protein belongs to the complex I 20 kDa subunit family. As to quaternary structure, NDH-1 is composed of 14 different subunits. Subunits NuoB, C, D, E, F, and G constitute the peripheral sector of the complex. [4Fe-4S] cluster serves as cofactor.

The protein localises to the cell inner membrane. It carries out the reaction a quinone + NADH + 5 H(+)(in) = a quinol + NAD(+) + 4 H(+)(out). Its function is as follows. NDH-1 shuttles electrons from NADH, via FMN and iron-sulfur (Fe-S) centers, to quinones in the respiratory chain. The immediate electron acceptor for the enzyme in this species is believed to be ubiquinone. Couples the redox reaction to proton translocation (for every two electrons transferred, four hydrogen ions are translocated across the cytoplasmic membrane), and thus conserves the redox energy in a proton gradient. In Sorangium cellulosum (strain So ce56) (Polyangium cellulosum (strain So ce56)), this protein is NADH-quinone oxidoreductase subunit B 1.